A 189-amino-acid polypeptide reads, in one-letter code: Putative OVARIAN TUMOR DOMAIN-containing deubiquitinating enzyme 8 (189 aa).

Positions 1 to 103 (MMKSDGNCQF…GIHFNSIYKK (103 aa)) constitute an OTU domain. The active site involves Asp5. The active-site Nucleophile is the Cys8. The active site involves His96. Positions 105 to 189 (KEKGSRSSSS…NRNHHFHYSE (85 aa)) are disordered. Residues 120–181 (WMKLQRKKEN…KKEKKEKKNR (62 aa)) are a coiled coil. 2 short sequence motifs (nuclear localization signal) span residues 125-132 (RKKENEAK) and 163-170 (KKKAKVQK). Over residues 126–174 (KKENEAKKKEEEEKERKDMEKEEKKKDKEDKKKDKEDKKKAKVQKEKKE) the composition is skewed to basic and acidic residues. A compositionally biased stretch (basic residues) spans 175-189 (KKEKKNRNHHFHYSE).

Belongs to the peptidase C85 family.

The protein resides in the nucleus. The catalysed reaction is Thiol-dependent hydrolysis of ester, thioester, amide, peptide and isopeptide bonds formed by the C-terminal Gly of ubiquitin (a 76-residue protein attached to proteins as an intracellular targeting signal).. Functionally, hydrolase that can remove conjugated ubiquitin from proteins in vitro and may therefore play an important regulatory role at the level of protein turnover by preventing degradation. This chain is Putative OVARIAN TUMOR DOMAIN-containing deubiquitinating enzyme 8, found in Arabidopsis thaliana (Mouse-ear cress).